We begin with the raw amino-acid sequence, 147 residues long: Sentan (147 aa).

Positions 14–34 are disordered; sequence RLEGEPNPPAAPTSTLAPKNM. Positions 25–34 are enriched in polar residues; that stretch reads PTSTLAPKNM.

It belongs to the S-100 family.

It localises to the cell projection. The protein localises to the cilium. Its function is as follows. May be a component of the linker structure that bridges the ciliary membrane and peripheral singlet microtubules. The chain is Sentan (SNTN) from Bos taurus (Bovine).